A 417-amino-acid chain; its full sequence is Phosphoglycerate kinase (417 aa).

V23, D24, F25, N26, Q38, R39, S62, H63, G65, R66, L121, R122, H169, and R170 together coordinate (2R)-3-phosphoglycerate. An ADP-binding site is contributed by G213. Residue G213 participates in CDP binding. Positions 214 and 215 each coordinate AMP. A214 contacts ATP. Position 214 (A214) interacts with Mg(2+). Position 218 (D218) interacts with CDP. D218 is a binding site for Mg(2+). K219 lines the AMP pocket. K219 is an ATP binding site. G237 is a binding site for ADP. CDP is bound at residue G237. G238 and G312 together coordinate AMP. G238 and G312 together coordinate ATP. Residues G337 and F342 each contribute to the CDP site. Position 342 (F342) interacts with ADP. E343 is a binding site for AMP. 3 residues coordinate ATP: E343, D374, and T375. Residue D374 participates in Mg(2+) binding.

The protein belongs to the phosphoglycerate kinase family. In terms of assembly, monomer. Requires Mg(2+) as cofactor.

The protein resides in the cytoplasm. Its subcellular location is the mitochondrion. The enzyme catalyses (2R)-3-phosphoglycerate + ATP = (2R)-3-phospho-glyceroyl phosphate + ADP. It functions in the pathway carbohydrate degradation; glycolysis; pyruvate from D-glyceraldehyde 3-phosphate: step 2/5. Its function is as follows. Catalyzes one of the two ATP producing reactions in the glycolytic pathway via the reversible conversion of 1,3-diphosphoglycerate to 3-phosphoglycerate. Both L- and D- forms of purine and pyrimidine nucleotides can be used as substrates, but the activity is much lower on pyrimidines. Negatively regulates the biosynthesis of acetyl-CoA from pyruvate in the mitochondrion. This chain is Phosphoglycerate kinase (PGK1), found in Yarrowia lipolytica (strain CLIB 122 / E 150) (Yeast).